Here is a 162-residue protein sequence, read N- to C-terminus: Podoplanin (162 aa).

The signal sequence occupies residues 1-22 (MWKVSALLFVLGSASLWVLAEG). A disordered region spans residues 23 to 57 (ASTGQPEDDTETTGLEGGVAMPGAEDDVVTPGTSE). The Extracellular segment spans residues 23-131 (ASTGQPEDDT…EKDGLSTVTL (109 aa)). O-linked (GalNAc...) threonine glycans are attached at residues Thr-25, Thr-32, Thr-34, Thr-35, Thr-52, Thr-55, Thr-65, Thr-66, Thr-76, and Thr-85. Over residues 85-108 (TSESTVHAQEQSPSATASNVATSH) the composition is skewed to polar residues. The disordered stretch occupies residues 85-119 (TSESTVHAQEQSPSATASNVATSHSTEKVDGDTQT). O-linked (GalNAc...) serine glycosylation is found at Ser-86 and Ser-88. An O-linked (GalNAc...) threonine glycan is attached at Thr-89. O-linked (GalNAc...) serine glycosylation is found at Ser-96 and Ser-98. O-linked (GalNAc...) threonine glycosylation occurs at Thr-100. Ser-102 carries O-linked (GalNAc...) serine glycosylation. Thr-106 is a glycosylation site (O-linked (GalNAc...) threonine). Ser-107 and Ser-109 each carry an O-linked (GalNAc...) serine glycan. Over residues 109–119 (STEKVDGDTQT) the composition is skewed to basic and acidic residues. 4 O-linked (GalNAc...) threonine glycosylation sites follow: Thr-110, Thr-117, Thr-119, and Thr-120. A helical membrane pass occupies residues 132–152 (VGIIVGVLLAIGFIGAIIVVV). Residues 133–137 (GIIVG) form a requires for dimerization and lipid rafts association region. The Cytoplasmic segment spans residues 153–162 (MRKMSGRYSP). The interval 154-155 (RK) is requires for interaction with MSN and EZR.

It belongs to the podoplanin family. Homodimer. Interacts with CLEC1B; the interaction is independent of CLEC1B glycosylation and activates CLEC1B; the interaction is dependent of sialic acid on O-glycans. Interacts with CD9; this interaction is homophilic and attenuates platelet aggregation and pulmonary metastasis induced by PDPN. Interacts with LGALS8; the interaction is glycosylation-dependent; may participate in connection of the lymphatic endothelium to the surrounding extracellular matrix. Interacts with HSPA9. Interacts (via extracellular domain) with CD44; this interaction is required for PDPN-mediated directional migration and regulation of lamellipodia extension/stabilization during cell spreading and migration. Interacts (via cytoplasmic domain) with MSN and EZR; activates RHOA and promotes epithelial-mesenchymal transition. Interacts with CCL21; relocalized PDPN to the basolateral membrane. In terms of processing, extensively O-glycosylated. Contains sialic acid residues. O-glycosylation is necessary for platelet aggregation activity. Disialylated at Thr-52; sialic acid is critical for platelet-aggregating activity and for CLEC1B interaction. The N-terminus is blocked. Post-translationally, cleaved by a metalloprotease within its extracellular (EC) domain, generating a membrane-bound C-terminal fragment (PCTF33) and an extracellular fragment. The resulting membrane-bound C-terminal fragment (PCTF33) is further processed between Val-150 and Val-151 by PSEN1/gamma-secretase generating the intracellular domain of podoplanin (PICD). Highly expressed in placenta, lung, skeletal muscle and brain. Weakly expressed in brain, kidney and liver. In placenta, expressed on the apical plasma membrane of endothelium. In lung, expressed in alveolar epithelium. Up-regulated in colorectal tumors and expressed in 25% of early oral squamous cell carcinomas.

The protein resides in the membrane. It localises to the cell projection. Its subcellular location is the lamellipodium membrane. The protein localises to the filopodium membrane. It is found in the microvillus membrane. The protein resides in the ruffle membrane. It localises to the membrane raft. Its subcellular location is the apical cell membrane. The protein localises to the basolateral cell membrane. It is found in the invadopodium. The protein resides in the cytoplasm. It localises to the cytosol. Mediates effects on cell migration and adhesion through its different partners. During development plays a role in blood and lymphatic vessels separation by binding CLEC1B, triggering CLEC1B activation in platelets and leading to platelet activation and/or aggregation. Interaction with CD9, on the contrary, attenuates platelet aggregation induced by PDPN. Through MSN or EZR interaction promotes epithelial-mesenchymal transition (EMT) leading to ERZ phosphorylation and triggering RHOA activation leading to cell migration increase and invasiveness. Interaction with CD44 promotes directional cell migration in epithelial and tumor cells. In lymph nodes (LNs), controls fibroblastic reticular cells (FRCs) adhesion to the extracellular matrix (ECM) and contraction of the actomyosin by maintaining ERM proteins (EZR; MSN and RDX) and MYL9 activation through association with unknown transmembrane proteins. Engagement of CLEC1B by PDPN promotes FRCs relaxation by blocking lateral membrane interactions leading to reduction of ERM proteins (EZR; MSN and RDX) and MYL9 activation. Through binding with LGALS8 may participate in connection of the lymphatic endothelium to the surrounding extracellular matrix. In keratinocytes, induces changes in cell morphology showing an elongated shape, numerous membrane protrusions, major reorganization of the actin cytoskeleton, increased motility and decreased cell adhesion. Controls invadopodia stability and maturation leading to efficient degradation of the extracellular matrix (ECM) in tumor cells through modulation of RHOC activity in order to activate ROCK1/ROCK2 and LIMK1/LIMK2 and inactivation of CFL1. Required for normal lung cell proliferation and alveolus formation at birth. Does not function as a water channel or as a regulator of aquaporin-type water channels. Does not have any effect on folic acid or amino acid transport. The protein is Podoplanin of Homo sapiens (Human).